Consider the following 388-residue polypeptide: Succinate--CoA ligase [ADP-forming] subunit beta (388 aa).

The ATP-grasp domain maps to 9–244 (KQLFAEYGLP…PSQDDPREAH (236 aa)). Residues lysine 46, 53–55 (GRG), glutamate 99, threonine 102, and glutamate 107 each bind ATP. Residues asparagine 199 and aspartate 213 each coordinate Mg(2+). Substrate-binding positions include asparagine 264 and 321 to 323 (GIV).

Belongs to the succinate/malate CoA ligase beta subunit family. As to quaternary structure, heterotetramer of two alpha and two beta subunits. Mg(2+) is required as a cofactor.

The enzyme catalyses succinate + ATP + CoA = succinyl-CoA + ADP + phosphate. The catalysed reaction is GTP + succinate + CoA = succinyl-CoA + GDP + phosphate. The protein operates within carbohydrate metabolism; tricarboxylic acid cycle; succinate from succinyl-CoA (ligase route): step 1/1. In terms of biological role, succinyl-CoA synthetase functions in the citric acid cycle (TCA), coupling the hydrolysis of succinyl-CoA to the synthesis of either ATP or GTP and thus represents the only step of substrate-level phosphorylation in the TCA. The beta subunit provides nucleotide specificity of the enzyme and binds the substrate succinate, while the binding sites for coenzyme A and phosphate are found in the alpha subunit. The protein is Succinate--CoA ligase [ADP-forming] subunit beta of Pseudomonas fluorescens (strain SBW25).